We begin with the raw amino-acid sequence, 86 residues long: High affinity immunoglobulin epsilon receptor subunit gamma (86 aa).

The signal sequence occupies residues 1 to 18; sequence MISAVILFLLLLVEQAAA. The Extracellular portion of the chain corresponds to 19–23; the sequence is LGEPQ. A helical membrane pass occupies residues 24-44; sequence LCYILDAVLFLYGIVLTLLYC. Topologically, residues 45–86 are cytoplasmic; the sequence is RLKIQVRKAAIASREKADAVYTGLNTRSQETYETLKHEKPPQ. An ITAM domain is found at 54–82; sequence AIASREKADAVYTGLNTRSQETYETLKHE. Phosphotyrosine occurs at positions 65 and 76. T78 is modified (phosphothreonine).

Belongs to the CD3Z/FCER1G family. In terms of assembly, igE Fc receptor is a tetramer of an alpha chain, a beta chain, and two disulfide linked gamma chains. Associates with FCGR1A; forms a functional signaling complex. The signaling subunit of immunoglobulin gamma (IgG) Fc receptor complex. As a homodimer or a heterodimer of CD247 and FCER1G, associates with the ligand binding subunit FCGR3A to form a functional receptor complex. Associates with CLEC6A. Interacts with CLEC4E. Interacts (via ITAM domain) with SYK (via SH2 domains); activates SYK, enabling integrin-mediated activation of neutrophils and macrophages. Interacts with CSF2RB and recruits SYK in response to IL3 stimulation; this interaction is direct. Interacts with CD300LH; the interaction may be indirect. Interacts with CD300LD. Interacts with TARM1. Expressed in mast cells (at protein level). Expressed in basophils (at protein level).

The protein resides in the cell membrane. In terms of biological role, adapter protein containing an immunoreceptor tyrosine-based activation motif (ITAM) that transduces activation signals from various immunoreceptors. As a component of the high-affinity immunoglobulin E (IgE) receptor, mediates allergic inflammatory signaling in mast cells. As a constitutive component of interleukin-3 receptor complex, selectively mediates interleukin 4/IL4 production by basophils, priming T-cells toward effector T-helper 2 subset. Associates with pattern recognition receptors CLEC4D and CLEC4E to form a functional signaling complex in myeloid cells. Binding of mycobacterial trehalose 6,6'-dimycolate (TDM) to this receptor complex leads to phosphorylation of ITAM, triggering activation of SYK, CARD9 and NF-kappa-B, consequently driving maturation of antigen-presenting cells and shaping antigen-specific priming of T-cells toward effector T-helper 1 and T-helper 17 cell subtypes. May function cooperatively with other activating receptors. Functionally linked to integrin beta-2/ITGB2-mediated neutrophil activation. Also involved in integrin alpha-2/ITGA2-mediated platelet activation. The protein is High affinity immunoglobulin epsilon receptor subunit gamma of Mus musculus (Mouse).